The primary structure comprises 125 residues: Small ribosomal subunit protein uS12 (125 aa).

Asp-89 bears the 3-methylthioaspartic acid mark.

It belongs to the universal ribosomal protein uS12 family. In terms of assembly, part of the 30S ribosomal subunit. Contacts proteins S8 and S17. May interact with IF1 in the 30S initiation complex.

With S4 and S5 plays an important role in translational accuracy. In terms of biological role, interacts with and stabilizes bases of the 16S rRNA that are involved in tRNA selection in the A site and with the mRNA backbone. Located at the interface of the 30S and 50S subunits, it traverses the body of the 30S subunit contacting proteins on the other side and probably holding the rRNA structure together. The combined cluster of proteins S8, S12 and S17 appears to hold together the shoulder and platform of the 30S subunit. This is Small ribosomal subunit protein uS12 from Ralstonia nicotianae (strain ATCC BAA-1114 / GMI1000) (Ralstonia solanacearum).